A 450-amino-acid chain; its full sequence is tRNA modification GTPase MnmE (450 aa).

Arginine 23, glutamate 79, and lysine 118 together coordinate (6S)-5-formyl-5,6,7,8-tetrahydrofolate. Residues 214–374 (GITLILVGKP…LKEHILNKVG (161 aa)) enclose the TrmE-type G domain. Position 224 (asparagine 224) interacts with K(+). Residues 224 to 229 (NAGKSS), 243 to 249 (TSIAGTT), and 268 to 271 (DTAG) each bind GTP. Position 228 (serine 228) interacts with Mg(2+). Residues threonine 243, isoleucine 245, and threonine 248 each contribute to the K(+) site. A Mg(2+)-binding site is contributed by threonine 249. Lysine 450 serves as a coordination point for (6S)-5-formyl-5,6,7,8-tetrahydrofolate.

This sequence belongs to the TRAFAC class TrmE-Era-EngA-EngB-Septin-like GTPase superfamily. TrmE GTPase family. In terms of assembly, homodimer. Heterotetramer of two MnmE and two MnmG subunits. It depends on K(+) as a cofactor.

The protein localises to the cytoplasm. Its function is as follows. Exhibits a very high intrinsic GTPase hydrolysis rate. Involved in the addition of a carboxymethylaminomethyl (cmnm) group at the wobble position (U34) of certain tRNAs, forming tRNA-cmnm(5)s(2)U34. The sequence is that of tRNA modification GTPase MnmE from Francisella tularensis subsp. holarctica (strain FTNF002-00 / FTA).